The following is a 1501-amino-acid chain: Protein SNQ2 (1501 aa).

Over residues 1–17 (MSNIKSTQDSSHNAVAR) the composition is skewed to polar residues. The interval 1 to 56 (MSNIKSTQDSSHNAVARSSSASFAASEESFTGITHDKDEQSDTPADKLTKMLTGPA) is disordered. At Ser2 the chain carries N-acetylserine. The span at 18–30 (SSSASFAASEESF) shows a compositional bias: low complexity. Phosphoserine is present on residues Ser26 and Ser29. Basic and acidic residues predominate over residues 34–49 (THDKDEQSDTPADKLT). Ser64, Ser80, and Ser86 each carry phosphoserine. The ABC transporter 1 domain maps to 161–410 (FKGIKAKRHQ…FAKMGYLCPP (250 aa)). 3 N-linked (GlcNAc...) asparagine glycosylation sites follow: Asn273, Asn334, and Asn518. Helical transmembrane passes span 521-541 (YTVI…SLFY), 554-574 (GGVL…NISF), 600-620 (LASF…LFFL), 628-648 (GSFF…NGLF), and 664-680 (ISGI…TYMI). An N-linked (GlcNAc...) asparagine glycan is attached at Asn730. A helical membrane pass occupies residues 771 to 789 (FGILWCFLLGYVVLKVIFT). In terms of domain architecture, ABC transporter 2 spans 853–1095 (FIWKDVCFTI…ILNYFERNGA (243 aa)). N-linked (GlcNAc...) asparagine glycosylation occurs at Asn874. 889–896 (GESGAGKT) is a binding site for ATP. Thr1153 carries the post-translational modification Phosphothreonine. A run of 4 helical transmembrane segments spans residues 1190 to 1212 (IMSK…FNVG), 1216 to 1236 (VGLQ…APAM), 1277 to 1296 (HLFF…RIFF), and 1333 to 1352 (ANVI…GVTQ). Asn1401 carries an N-linked (GlcNAc...) asparagine glycan. A helical membrane pass occupies residues 1455–1475 (FGIFWIYIFFNIIAMVCVYYL).

It belongs to the ABC transporter superfamily. ABCG family. PDR (TC 3.A.1.205) subfamily.

The protein localises to the membrane. Functionally, could be an ATP-dependent permease. Confers hyper-resistance to the mutagens 4-nitroquinoline-N-oxide (4-NQO) and triaziquone, as well as to the chemicals sulphomethuron methyl phenanthroline when present in multiple copies. Exhibits nucleoside triphosphatase activity. The sequence is that of Protein SNQ2 (SNQ2) from Saccharomyces cerevisiae (strain ATCC 204508 / S288c) (Baker's yeast).